The chain runs to 364 residues: Cobalt-precorrin-5B C(1)-methyltransferase (364 aa).

Belongs to the CbiD family.

The catalysed reaction is Co-precorrin-5B + S-adenosyl-L-methionine = Co-precorrin-6A + S-adenosyl-L-homocysteine. The protein operates within cofactor biosynthesis; adenosylcobalamin biosynthesis; cob(II)yrinate a,c-diamide from sirohydrochlorin (anaerobic route): step 6/10. Functionally, catalyzes the methylation of C-1 in cobalt-precorrin-5B to form cobalt-precorrin-6A. This chain is Cobalt-precorrin-5B C(1)-methyltransferase, found in Pseudomonas putida (strain W619).